The primary structure comprises 529 residues: Probable threonine/serine exporter (529 aa).

10 consecutive transmembrane segments (helical) span residues 88 to 108 (ITVT…PVTI), 168 to 188 (FALG…LAAV), 212 to 232 (VFGA…AGQD), 234 to 254 (TALV…VGSM), 265 to 285 (ALAR…GILI), 312 to 332 (MPLP…CLTI), 344 to 364 (AGLS…AGFG), 365 to 385 (RVVA…LISI), 389 to 409 (APAL…LAVF), and 428 to 448 (LLEA…GEFL). A disordered region spans residues 482–501 (QPAKSQQPTGTGGQRWRSVA).

This sequence belongs to the ThrE exporter (TC 2.A.79) family.

It localises to the cell membrane. The enzyme catalyses L-threonine(in) + H(+)(out) = L-threonine(out) + H(+)(in). In terms of biological role, catalyzes the export of L-threonine and L-serine from the cell to the extracellular environment. Export is dependent on the proton motive force. Required for in vitro growth and survival of bacteria inside macrophages. Increased expression is associated with low-level amikacin (AMK) resistance. In Mycobacterium tuberculosis (strain ATCC 25618 / H37Rv), this protein is Probable threonine/serine exporter.